A 219-amino-acid polypeptide reads, in one-letter code: Cyclin-U4-3 (219 aa).

The protein belongs to the cyclin family. Cyclin U/P subfamily. In terms of assembly, interacts with CDKA-1. In terms of tissue distribution, expressed at low levels in roots, stems and flowers. Expressed in the shoot apex, leaf primordia and young leaves.

In Arabidopsis thaliana (Mouse-ear cress), this protein is Cyclin-U4-3 (CYCU4-3).